The primary structure comprises 418 residues: Glutamyl-tRNA reductase (418 aa).

Residues Thr-49–Arg-52, Ser-107, Glu-112–Gln-114, and Gln-118 contribute to the substrate site. Cys-50 acts as the Nucleophile in catalysis. Gly-187 to Ile-192 contributes to the NADP(+) binding site.

It belongs to the glutamyl-tRNA reductase family. Homodimer.

It catalyses the reaction (S)-4-amino-5-oxopentanoate + tRNA(Glu) + NADP(+) = L-glutamyl-tRNA(Glu) + NADPH + H(+). The protein operates within porphyrin-containing compound metabolism; protoporphyrin-IX biosynthesis; 5-aminolevulinate from L-glutamyl-tRNA(Glu): step 1/2. In terms of biological role, catalyzes the NADPH-dependent reduction of glutamyl-tRNA(Glu) to glutamate 1-semialdehyde (GSA). The sequence is that of Glutamyl-tRNA reductase from Vibrio campbellii (strain ATCC BAA-1116).